A 258-amino-acid chain; its full sequence is Snake venom serine protease CL2 (258 aa).

Residues 1–18 (MVLIRVLANLLIIQLSYA) form the signal peptide. Positions 19 to 24 (QKSSEL) are excised as a propeptide. A Peptidase S1 domain is found at 25–249 (VIGGDECNIN…YTDWIKSIIA (225 aa)). 6 cysteine pairs are disulfide-bonded: cysteine 31–cysteine 163, cysteine 50–cysteine 66, cysteine 98–cysteine 256, cysteine 142–cysteine 210, cysteine 174–cysteine 189, and cysteine 200–cysteine 225. Asparagine 44 is a glycosylation site (N-linked (GlcNAc...) asparagine). Histidine 65 (charge relay system) is an active-site residue. Residue asparagine 103 is glycosylated (N-linked (GlcNAc...) asparagine). Aspartate 110 serves as the catalytic Charge relay system. Asparagine 121 carries N-linked (GlcNAc...) asparagine glycosylation. Serine 204 acts as the Charge relay system in catalysis. Asparagine 251 carries N-linked (GlcNAc...) asparagine glycosylation.

Belongs to the peptidase S1 family. Snake venom subfamily. Monomer. As to expression, expressed by the venom gland.

It is found in the secreted. In terms of biological role, snake venom serine protease that may act in the hemostasis system of the prey. In Trimeresurus stejnegeri (Chinese green tree viper), this protein is Snake venom serine protease CL2.